The sequence spans 524 residues: Nickel-binding periplasmic protein (524 aa).

The first 22 residues, 1–22, serve as a signal peptide directing secretion; the sequence is MLSTLRRTLFALLACASFIVHA.

This sequence belongs to the bacterial solute-binding protein 5 family.

Its subcellular location is the periplasm. In terms of biological role, involved in a nickel transport system, probably represents the nickel binder. This Escherichia coli (strain K12) protein is Nickel-binding periplasmic protein (nikA).